Consider the following 421-residue polypeptide: Gamma-glutamyl phosphate reductase (421 aa).

The protein belongs to the gamma-glutamyl phosphate reductase family.

It is found in the cytoplasm. It carries out the reaction L-glutamate 5-semialdehyde + phosphate + NADP(+) = L-glutamyl 5-phosphate + NADPH + H(+). The protein operates within amino-acid biosynthesis; L-proline biosynthesis; L-glutamate 5-semialdehyde from L-glutamate: step 2/2. Catalyzes the NADPH-dependent reduction of L-glutamate 5-phosphate into L-glutamate 5-semialdehyde and phosphate. The product spontaneously undergoes cyclization to form 1-pyrroline-5-carboxylate. In Stutzerimonas stutzeri (strain A1501) (Pseudomonas stutzeri), this protein is Gamma-glutamyl phosphate reductase.